A 209-amino-acid chain; its full sequence is Potassium-transporting ATPase KdpC subunit (209 aa).

The chain crosses the membrane as a helical span at residues 18–38 (MLAVFTLFGLGLAYSLVATGI).

Belongs to the KdpC family. In terms of assembly, the system is composed of three essential subunits: KdpA, KdpB and KdpC.

The protein localises to the cell inner membrane. Functionally, part of the high-affinity ATP-driven potassium transport (or Kdp) system, which catalyzes the hydrolysis of ATP coupled with the electrogenic transport of potassium into the cytoplasm. This subunit acts as a catalytic chaperone that increases the ATP-binding affinity of the ATP-hydrolyzing subunit KdpB by the formation of a transient KdpB/KdpC/ATP ternary complex. This chain is Potassium-transporting ATPase KdpC subunit, found in Xanthomonas oryzae pv. oryzae (strain MAFF 311018).